Consider the following 286-residue polypeptide: 33 kDa chaperonin (286 aa).

Intrachain disulfides connect Cys-233/Cys-235 and Cys-267/Cys-270.

The protein belongs to the HSP33 family. Post-translationally, under oxidizing conditions two disulfide bonds are formed involving the reactive cysteines. Under reducing conditions zinc is bound to the reactive cysteines and the protein is inactive.

Its subcellular location is the cytoplasm. Functionally, redox regulated molecular chaperone. Protects both thermally unfolding and oxidatively damaged proteins from irreversible aggregation. Plays an important role in the bacterial defense system toward oxidative stress. This is 33 kDa chaperonin from Histophilus somni (strain 129Pt) (Haemophilus somnus).